Reading from the N-terminus, the 102-residue chain is Integration host factor subunit beta (102 aa).

This sequence belongs to the bacterial histone-like protein family. In terms of assembly, heterodimer of an alpha and a beta chain.

Its function is as follows. This protein is one of the two subunits of integration host factor, a specific DNA-binding protein that functions in genetic recombination as well as in transcriptional and translational control. The protein is Integration host factor subunit beta of Rhizobium rhizogenes (strain K84 / ATCC BAA-868) (Agrobacterium radiobacter).